The primary structure comprises 373 residues: Transcription factor SPATULA (373 aa).

A compositionally biased stretch (basic and acidic residues) spans 1-21 (MISQREEREEKKQRVMGDKKL). 2 disordered regions span residues 1–46 (MISQ…PSSS) and 141–210 (VQGN…KRRR). Residues 141-160 (VQGNSSGTRVSSSSVGASGN) are compositionally biased toward low complexity. Positions 161-177 (ETDEYDCESEEGGEAVV) are enriched in acidic residues. Positions 182-191 (SSKSGPSSRS) are enriched in low complexity. Positions 197-210 (RAAEVHNLSEKRRR) are enriched in basic and acidic residues. Positions 197–246 (RAAEVHNLSEKRRRSRINEKMKALQSLIPNSNKTDKASMLDEAIEYLKQL) constitute a bHLH domain.

As to quaternary structure, homodimer. Interacts with HEC1, HEC2 and HEC3. Binds to RGL2 and RGA. As to expression, expressed in lateral root caps, young leaves, stipules, maturing pith cells of the stem, differentiating vascular cells, shoot apical meristems and flowers.

Its subcellular location is the nucleus. Functionally, transcription factor that plays a role in floral organogenesis. Promotes the growth of carpel margins and of pollen tract tissues derived from them. This is Transcription factor SPATULA (SPT) from Arabidopsis thaliana (Mouse-ear cress).